The primary structure comprises 303 residues: uncharacterized protein (303 aa).

4 helical membrane-spanning segments follow: residues 55 to 77 (FLVKVAVLCMFISMTLASFLFIQ), 92 to 111 (PAVFSIFTVICIFMTYTKII), 208 to 230 (FSLPHYMSLMFCGSIIVVYATSL), and 240 to 257 (IPHIFIFLLLIIFLKILI).

The protein resides in the cell membrane. This is an uncharacterized protein from Bacillus subtilis (strain 168).